The sequence spans 115 residues: Ig heavy chain V-III region J606 (115 aa).

The Ig-like domain maps to 1–114 (EVKLEESGGG…WGQGTLVTVS (114 aa)). Cysteines 22 and 98 form a disulfide.

This is Ig heavy chain V-III region J606 from Mus musculus (Mouse).